The primary structure comprises 86 residues: UPF0367 protein NATL1_01981 (86 aa).

The protein belongs to the UPF0367 family.

The polypeptide is UPF0367 protein NATL1_01981 (Prochlorococcus marinus (strain NATL1A)).